A 113-amino-acid chain; its full sequence is Cell division topological specificity factor (113 aa).

This sequence belongs to the MinE family.

In terms of biological role, prevents the cell division inhibition by proteins MinC and MinD at internal division sites while permitting inhibition at polar sites. This ensures cell division at the proper site by restricting the formation of a division septum at the midpoint of the long axis of the cell. The sequence is that of Cell division topological specificity factor from Methylobacterium radiotolerans (strain ATCC 27329 / DSM 1819 / JCM 2831 / NBRC 15690 / NCIMB 10815 / 0-1).